A 903-amino-acid polypeptide reads, in one-letter code: Translation initiation factor IF-2 (903 aa).

Disordered stretches follow at residues 57-171 and 267-318; these read EKFK…QRRR and PTPQ…EAVT. A compositionally biased stretch (basic and acidic residues) spans 69–163; that stretch reads KKEAKEPSEK…SEPQKPKESL (95 aa). A compositionally biased stretch (low complexity) spans 267–278; sequence PTPQPMQKTKQP. Residues 299–308 are compositionally biased toward basic residues; that stretch reads RRARKKHKKP. Residues 402–569 enclose the tr-type G domain; the sequence is PRAPVITIMG…IVLLQAEILE (168 aa). Residues 411 to 418 are G1; sequence GHVDHGKT. A GTP-binding site is contributed by 411–418; sequence GHVDHGKT. The G2 stretch occupies residues 436–440; sequence GITQH. The tract at residues 457–460 is G3; the sequence is DTPG. GTP-binding positions include 457–461 and 511–514; these read DTPGH and NKMD. A G4 region spans residues 511–514; the sequence is NKMD. The segment at 547 to 549 is G5; sequence SAK.

The protein belongs to the TRAFAC class translation factor GTPase superfamily. Classic translation factor GTPase family. IF-2 subfamily.

Its subcellular location is the cytoplasm. Functionally, one of the essential components for the initiation of protein synthesis. Protects formylmethionyl-tRNA from spontaneous hydrolysis and promotes its binding to the 30S ribosomal subunits. Also involved in the hydrolysis of GTP during the formation of the 70S ribosomal complex. In Campylobacter curvus (strain 525.92), this protein is Translation initiation factor IF-2.